The primary structure comprises 65 residues: Large ribosomal subunit protein bL35 (65 aa).

The disordered stretch occupies residues 1-65 (MQKIKTNRSA…KELKRLLPGM (65 aa)). Basic residues-rich tracts occupy residues 10–19 (AAKRFKRTKS) and 33–47 (LTKK…LRKS). Residues 54 to 65 (NNKELKRLLPGM) are compositionally biased toward basic and acidic residues.

The protein belongs to the bacterial ribosomal protein bL35 family.

The sequence is that of Large ribosomal subunit protein bL35 from Desulfosudis oleivorans (strain DSM 6200 / JCM 39069 / Hxd3) (Desulfococcus oleovorans).